Here is a 492-residue protein sequence, read N- to C-terminus: Proline--tRNA ligase (492 aa).

Belongs to the class-II aminoacyl-tRNA synthetase family. ProS type 3 subfamily. In terms of assembly, homodimer.

The protein localises to the cytoplasm. It catalyses the reaction tRNA(Pro) + L-proline + ATP = L-prolyl-tRNA(Pro) + AMP + diphosphate. In terms of biological role, catalyzes the attachment of proline to tRNA(Pro) in a two-step reaction: proline is first activated by ATP to form Pro-AMP and then transferred to the acceptor end of tRNA(Pro). This chain is Proline--tRNA ligase, found in Christiangramia forsetii (strain DSM 17595 / CGMCC 1.15422 / KT0803) (Gramella forsetii).